A 514-amino-acid polypeptide reads, in one-letter code: Membrane-bound lytic murein transglycosylase F (514 aa).

The first 30 residues, 1-30, serve as a signal peptide directing secretion; that stretch reads MKKLKINYLFIGILTLLLAAALWPSIPWFG. The interval 31-269 is non-LT domain; that stretch reads KTENHIAAIQ…RIEEKYLGHG (239 aa). Residues 270-514 are LT domain; the sequence is DDFDYVDTRS…LFTPQKKEEK (245 aa). Glu314 is an active-site residue.

In the N-terminal section; belongs to the bacterial solute-binding protein 3 family. This sequence in the C-terminal section; belongs to the transglycosylase Slt family.

Its subcellular location is the cell outer membrane. The catalysed reaction is Exolytic cleavage of the (1-&gt;4)-beta-glycosidic linkage between N-acetylmuramic acid (MurNAc) and N-acetylglucosamine (GlcNAc) residues in peptidoglycan, from either the reducing or the non-reducing ends of the peptidoglycan chains, with concomitant formation of a 1,6-anhydrobond in the MurNAc residue.. In terms of biological role, murein-degrading enzyme that degrades murein glycan strands and insoluble, high-molecular weight murein sacculi, with the concomitant formation of a 1,6-anhydromuramoyl product. Lytic transglycosylases (LTs) play an integral role in the metabolism of the peptidoglycan (PG) sacculus. Their lytic action creates space within the PG sacculus to allow for its expansion as well as for the insertion of various structures such as secretion systems and flagella. This chain is Membrane-bound lytic murein transglycosylase F, found in Salmonella paratyphi B (strain ATCC BAA-1250 / SPB7).